Here is a 365-residue protein sequence, read N- to C-terminus: Chorismate synthase (365 aa).

R46 lines the NADP(+) pocket. Residues 123 to 125 (RSS), 241 to 242 (NG), G281, 296 to 300 (KPTPS), and R322 contribute to the FMN site.

This sequence belongs to the chorismate synthase family. In terms of assembly, homotetramer. Requires FMNH2 as cofactor.

It carries out the reaction 5-O-(1-carboxyvinyl)-3-phosphoshikimate = chorismate + phosphate. Its pathway is metabolic intermediate biosynthesis; chorismate biosynthesis; chorismate from D-erythrose 4-phosphate and phosphoenolpyruvate: step 7/7. In terms of biological role, catalyzes the anti-1,4-elimination of the C-3 phosphate and the C-6 proR hydrogen from 5-enolpyruvylshikimate-3-phosphate (EPSP) to yield chorismate, which is the branch point compound that serves as the starting substrate for the three terminal pathways of aromatic amino acid biosynthesis. This reaction introduces a second double bond into the aromatic ring system. The chain is Chorismate synthase from Helicobacter pylori (strain J99 / ATCC 700824) (Campylobacter pylori J99).